The chain runs to 215 residues: 7-methyl-GTP pyrophosphatase (215 aa).

The active-site Proton acceptor is Asp-79.

It belongs to the Maf family. YceF subfamily. It depends on a divalent metal cation as a cofactor.

It is found in the cytoplasm. The catalysed reaction is N(7)-methyl-GTP + H2O = N(7)-methyl-GMP + diphosphate + H(+). Functionally, nucleoside triphosphate pyrophosphatase that hydrolyzes 7-methyl-GTP (m(7)GTP). May have a dual role in cell division arrest and in preventing the incorporation of modified nucleotides into cellular nucleic acids. This chain is 7-methyl-GTP pyrophosphatase, found in Burkholderia mallei (strain ATCC 23344).